The sequence spans 502 residues: Cytochrome P450 monooxygenase AacuE (502 aa).

A helical membrane pass occupies residues 4–26 (AITGLVATVTTFLAYIVFLSYTP). A glycan (N-linked (GlcNAc...) asparagine) is linked at Asn393. Cys439 serves as a coordination point for heme.

Belongs to the cytochrome P450 family. It depends on heme as a cofactor.

The protein resides in the membrane. It participates in secondary metabolite biosynthesis. Its function is as follows. Cytochrome P450 monooxygenase; part of the gene cluster that mediates the biosynthesis of the tetrahydroxanthone dimer secalonic acid D. The pathway begins with the synthesis of atrochrysone thioester by the polyketide synthase AacuL. The atrochrysone carboxyl ACP thioesterase AacuM then breaks the thioester bond and releases the atrochrysone carboxylic acid from AacuL. Atrochrysone carboxylic acid is decarboxylated by the decarboxylase AacuI, and oxidized by the anthrone oxygenase AacuG to yield emodin. Emodin is then reduced to emodin hydroquinone by a yet unidentified oxidoreductase. A-ring reduction by the short chain dehydrogenase AacuN, dehydration by the scytalone dehydratase-like protein AacuK and probable spontaneous re-oxidation, results in overall deoxygenation to chrysophanol. Baeyer-Villiger oxidation by the Baeyer-Villiger monooxygenase (BVMO) AacuH then yields monodictyphenone. Monodictyphenone is transformed into compounds with the tetrahydroxanthone skeleton via methylesterification by the methyltransferase AacuQ, followed by the action of the flavin-dependent monooxygenase AacuC, the isomerase AacuP, and the short chain dehydrogenase/reductase AacuF or AacuD. AacuF and AacuD should accept the same compound as a substrate but perform the ketoreduction with a different stereoselectivity, thus yielding blennolides B and A, respectively. In the final step of the biosynthesis, the cytochrome P450 monooxygenase AacuE accepts blennolide B and/or blennolide A to conduct the dimerization reaction to furnish the tetrahydroxanthone dimers, secalonic acids D, B, and F. This chain is Cytochrome P450 monooxygenase AacuE, found in Aspergillus aculeatus (strain ATCC 16872 / CBS 172.66 / WB 5094).